An 881-amino-acid chain; its full sequence is DNA replication helicase (881 aa).

90–97 is a binding site for ATP; it reads GNAGSGKS.

This sequence belongs to the herpesviridae helicase family. Associates with the primase and the primase-associated factor to form the helicase-primase complex.

The protein resides in the host nucleus. Component of the helicase/primase complex. Unwinds the DNA at the replication forks and generates single-stranded DNA for both leading and lagging strand synthesis. The primase synthesizes short RNA primers on the lagging strand that the polymerase elongates using dNTPs. Possesses helicase-like motifs and therefore may act as the helicase subunit of the complex. This chain is DNA replication helicase, found in Homo sapiens (Human).